Reading from the N-terminus, the 391-residue chain is Trehalose-phosphate phosphatase (391 aa).

The active-site Nucleophile is the Asp147. Positions 147, 149, and 330 each coordinate Mg(2+). Residue 147-149 (DFD) coordinates substrate.

Belongs to the trehalose phosphatase family. Requires Mg(2+) as cofactor.

The enzyme catalyses alpha,alpha-trehalose 6-phosphate + H2O = alpha,alpha-trehalose + phosphate. It participates in glycan biosynthesis; trehalose biosynthesis. Functionally, removes the phosphate from trehalose 6-phosphate to produce free trehalose. In Mycolicibacterium paratuberculosis (strain ATCC BAA-968 / K-10) (Mycobacterium paratuberculosis), this protein is Trehalose-phosphate phosphatase (otsB).